The sequence spans 494 residues: Acetylcholine receptor subunit epsilon (494 aa).

Positions 1-20 (MTMALLGTLLLLALFGRSQG) are cleaved as a signal peptide. The Extracellular segment spans residues 21-239 (KNEELSLYHH…VIYTLIIRRK (219 aa)). N-linked (GlcNAc...) asparagine glycans are attached at residues asparagine 86 and asparagine 161. Cysteine 148 and cysteine 162 are joined by a disulfide. The chain crosses the membrane as a helical span at residues 240–264 (PLFYVINIIVPCVLISGLVLLAYFL). Residues 265-272 (PAQAGGQK) lie on the Cytoplasmic side of the membrane. A helical membrane pass occupies residues 273–291 (CTVSINVLLAQTVFLFLIA). Topologically, residues 292 to 306 (QKIPETSLSVPLLGR) are extracellular. A helical membrane pass occupies residues 307 to 328 (YLIFVMVVATLIVMNCVIVLNV). The Cytoplasmic portion of the chain corresponds to 329–457 (SLRTPTTHAT…WVRMGKALDN (129 aa)). A helical membrane pass occupies residues 458–481 (VCFWAALVLFSVGSTLIFLGGYFN). Residues 482-494 (QVPDLPYPPCIQP) lie on the Extracellular side of the membrane.

The protein belongs to the ligand-gated ion channel (TC 1.A.9) family. Acetylcholine receptor (TC 1.A.9.1) subfamily. Epsilon/CHRNE sub-subfamily. As to quaternary structure, pentamer of two alpha chains, and one each of the beta, delta, and gamma (in immature muscle) or epsilon (in mature muscle) chains. The muscle heteropentamer composed of alpha-1, beta-1, delta, epsilon subunits interacts with the alpha-conotoxin ImII.

The protein resides in the postsynaptic cell membrane. It localises to the cell membrane. The catalysed reaction is K(+)(in) = K(+)(out). The enzyme catalyses Na(+)(in) = Na(+)(out). In terms of biological role, after binding acetylcholine, the AChR responds by an extensive change in conformation that affects all subunits and leads to opening of an ion-conducting channel across the plasma membrane. The polypeptide is Acetylcholine receptor subunit epsilon (Chrne) (Rattus norvegicus (Rat)).